Reading from the N-terminus, the 120-residue chain is Large ribosomal subunit protein bL17 (120 aa).

Belongs to the bacterial ribosomal protein bL17 family. Part of the 50S ribosomal subunit. Contacts protein L32.

This chain is Large ribosomal subunit protein bL17, found in Mesomycoplasma hyopneumoniae (strain J / ATCC 25934 / NCTC 10110) (Mycoplasma hyopneumoniae).